Here is a 606-residue protein sequence, read N- to C-terminus: Sporulation kinase A (606 aa).

A PAS 1 domain is found at 3 to 73 (QDTQHVKPLQ…SYFYNEHHLM (71 aa)). The region spanning 77-116 (FRFIKKDHTIVWVEAAVEIVTTRAERTEREIILKMKVLEE) is the PAC 1 domain. The 75-residue stretch at 140 to 214 (YITDDYERLV…IRMQKGMEVG (75 aa)) folds into the PAS 2 domain. One can recognise a PAC 2 domain in the interval 218–255 (QTWKRLDGTPVHLEVKASPTVYKNQQAELLLLIDISSR). Residues 265 to 335 (SRERYQLLIQ…ERIQNIAEQK (71 aa)) enclose the PAS 3 domain. Residues 402 to 606 (GIAHEIRNPL…TAFKISFPKK (205 aa)) form the Histidine kinase domain. Histidine 405 carries the post-translational modification Phosphohistidine; by autocatalysis.

It catalyses the reaction ATP + protein L-histidine = ADP + protein N-phospho-L-histidine.. Functionally, phosphorylates the sporulation-regulatory proteins spo0A and spo0F. It also autophosphorylates in the presence of ATP. This chain is Sporulation kinase A (kinA), found in Bacillus subtilis (strain 168).